A 61-amino-acid polypeptide reads, in one-letter code: Ferredoxin-2 (61 aa).

4Fe-4S ferredoxin-type domains are found at residues 2 to 27 and 28 to 61; these read HRIT…SAGD and EIYI…IIKV. Positions 8, 11, 14, 18, 37, 40, 49, and 53 each coordinate [4Fe-4S] cluster.

[4Fe-4S] cluster is required as a cofactor.

Its function is as follows. Ferredoxins are iron-sulfur proteins that transfer electrons in a wide variety of metabolic reactions. The chain is Ferredoxin-2 from Chlorobium limicola.